The sequence spans 407 residues: MEVYLVGGAVRDKLLGIPVYDQDWVVVGATAEQMLNAGYSPVGKDFPVFLHPKTKQEYALARTERKTGQGYKGFECFFSPDVALEEDLLRRDLTINAIAMDSQGVLYDPYGGQQDLQNRILRHVSEAFVEDPLRVLRVARFAAKLAPLGFRVADETMQLMQSIVASGELSALTAERVWQEWHKSLLTPAPQQFLAVLRQCGALAVVLPEIDALFGVPQPEKWHPEIDTGIHTLLVAEQAAKLSSSAVVRFAAQVHDLGKGVTPPSEWPSHKMHCHTGLKLIKQLCERVRVPNEFRDLALMVCEQHSNIHRAAELKPQTMVKIFNKLDVWRKAERLNDILLCCQADHAGRQGLQDHPYPQAERIQLAYQAALSVEVQSIIQDGFKGPAIRDEQERRRTEAVKAALLNA.

ATP contacts are provided by Gly-8 and Arg-11. Residues Gly-8 and Arg-11 each contribute to the CTP site. Mg(2+)-binding residues include Asp-21 and Asp-23. ATP is bound by residues Arg-91, Arg-137, and Arg-140. Arg-91, Arg-137, and Arg-140 together coordinate CTP. Positions Thr-228–Trp-329 constitute an HD domain.

This sequence belongs to the tRNA nucleotidyltransferase/poly(A) polymerase family. Bacterial CCA-adding enzyme type 1 subfamily. Monomer. Can also form homodimers and oligomers. Mg(2+) is required as a cofactor. The cofactor is Ni(2+).

It carries out the reaction a tRNA precursor + 2 CTP + ATP = a tRNA with a 3' CCA end + 3 diphosphate. The enzyme catalyses a tRNA with a 3' CCA end + 2 CTP + ATP = a tRNA with a 3' CCACCA end + 3 diphosphate. Functionally, catalyzes the addition and repair of the essential 3'-terminal CCA sequence in tRNAs without using a nucleic acid template. Adds these three nucleotides in the order of C, C, and A to the tRNA nucleotide-73, using CTP and ATP as substrates and producing inorganic pyrophosphate. tRNA 3'-terminal CCA addition is required both for tRNA processing and repair. Also involved in tRNA surveillance by mediating tandem CCA addition to generate a CCACCA at the 3' terminus of unstable tRNAs. While stable tRNAs receive only 3'-terminal CCA, unstable tRNAs are marked with CCACCA and rapidly degraded. This Vibrio vulnificus (strain CMCP6) protein is Multifunctional CCA protein.